The sequence spans 332 residues: Potassium channel subfamily K member 17 (332 aa).

Over 1 to 20 (MYRPRARAAPEGRVRGCAVP) the chain is Cytoplasmic. The helical transmembrane segment at 21–43 (STVLLLLAYLAYLALGTGVFWTL) threads the bilayer. 2 N-linked (GlcNAc...) asparagine glycosylation sites follow: Asn-65 and Asn-94. The segment at residues 106 to 124 (SFFFSVSTITTIGYGNLSP) is an intramembrane region (pore-forming). K(+) is bound by residues Thr-116, Ile-117, Gly-118, and Tyr-119. The interval 116–121 (TIGYGN) is selectivity filter 1. Residues 128-148 (AARLFCIFFALVGIPLNLVVL) form a helical membrane-spanning segment. The Cytoplasmic portion of the chain corresponds to 149-179 (NRLGHLMQQGVNHWASRLGGTWQDPDKARWL). The chain crosses the membrane as a helical span at residues 180–200 (AGSGALLSGLLLFLLLPPLLF). Positions 211-230 (GFYFAFITLSTVGFGDYVIG) form an intramembrane region, pore-forming. Residues Thr-221, Val-222, Gly-223, and Phe-224 each coordinate K(+). Residues 221–226 (TVGFGD) form a selectivity filter 2 region. A helical transmembrane segment spans residues 244 to 264 (MVSLWILFGMAWLALIIKLIL). Residues 265–332 (SQLETPGRVC…AHAAGCGKDS (68 aa)) are Cytoplasmic-facing. A disordered region spans residues 287 to 312 (SQSWRQGPDREPESHSPQQGCYPEGP).

The protein belongs to the two pore domain potassium channel (TC 1.A.1.8) family. As to quaternary structure, homodimer; disulfide-linked. Heterodimer with KCNK5 and KCNK16. Widely expressed. Highly expressed in aorta and coronary artery. Expressed in pancreas, in both endocrine (alpha, beta, gamma, delta, and epsilon) and exocrine (acinar and ductal) cells.

The protein resides in the cell membrane. It carries out the reaction K(+)(in) = K(+)(out). It catalyses the reaction Rb(+)(in) = Rb(+)(out). The catalysed reaction is Cs(+)(in) = Cs(+)(out). With respect to regulation, inhibited by Ba(2+), quinidine, chloroform and halothane. Activated at alkaline pH. Activated by quinine and isoflurane. K(+) channel that conducts voltage-dependent outward rectifying currents upon membrane depolarization. Voltage sensing is coupled to K(+) electrochemical gradient in an 'ion flux gating' mode where outward but not inward ion flow opens the gate. Homo- and heterodimerizes to form functional channels with distinct regulatory and gating properties. Present in the cardiac conduction system where it may regulate action potential duration and beating frequency of cardiac myocytes. Permeable to other monovalent cations such as Rb(+) and Cs(+). The polypeptide is Potassium channel subfamily K member 17 (Homo sapiens (Human)).